A 147-amino-acid polypeptide reads, in one-letter code: D-aminoacyl-tRNA deacylase (147 aa).

A Gly-cisPro motif, important for rejection of L-amino acids motif is present at residues 137-138 (GP).

It belongs to the DTD family. As to quaternary structure, homodimer.

The protein resides in the cytoplasm. The catalysed reaction is glycyl-tRNA(Ala) + H2O = tRNA(Ala) + glycine + H(+). It carries out the reaction a D-aminoacyl-tRNA + H2O = a tRNA + a D-alpha-amino acid + H(+). Functionally, an aminoacyl-tRNA editing enzyme that deacylates mischarged D-aminoacyl-tRNAs. Also deacylates mischarged glycyl-tRNA(Ala), protecting cells against glycine mischarging by AlaRS. Acts via tRNA-based rather than protein-based catalysis; rejects L-amino acids rather than detecting D-amino acids in the active site. By recycling D-aminoacyl-tRNA to D-amino acids and free tRNA molecules, this enzyme counteracts the toxicity associated with the formation of D-aminoacyl-tRNA entities in vivo and helps enforce protein L-homochirality. This Bacillus pumilus (strain SAFR-032) protein is D-aminoacyl-tRNA deacylase.